We begin with the raw amino-acid sequence, 434 residues long: Monodehydroascorbate reductase 1, peroxisomal (434 aa).

Residues 13–16, glutamate 40, arginine 47, lysine 52, isoleucine 95, and 146–147 contribute to the FAD site; these read GGVS and RE. NAD(+) contacts are provided by residues 171 to 177, glutamate 195, arginine 201, and glycine 260; that span reads GGYIGLE. Residue 173–177 participates in NADP(+) binding; sequence YIGLE. NADP(+)-binding residues include arginine 201 and glycine 260. Aspartate 297 is a binding site for FAD. 313–314 is a binding site for NAD(+); sequence EH. 313–314 provides a ligand contact to NADP(+); that stretch reads EH. Valine 315 provides a ligand contact to FAD. Position 319 (arginine 319) interacts with L-ascorbate. Tyrosine 348 provides a ligand contact to FAD. Tyrosine 348 contributes to the NAD(+) binding site. Residue tyrosine 348 coordinates NADP(+). Arginine 350 contributes to the L-ascorbate binding site. The residue at position 416 (serine 416) is a Phosphoserine.

Belongs to the FAD-dependent oxidoreductase family. It depends on FAD as a cofactor.

It localises to the peroxisome matrix. It carries out the reaction 2 monodehydro-L-ascorbate radical + NADH + H(+) = 2 L-ascorbate + NAD(+). Catalyzes the conversion of monodehydroascorbate to ascorbate, oxidizing NADH in the process. This chain is Monodehydroascorbate reductase 1, peroxisomal, found in Arabidopsis thaliana (Mouse-ear cress).